The primary structure comprises 588 residues: Aspartate--tRNA ligase (588 aa).

Glutamate 171 contributes to the L-aspartate binding site. Residues 195–198 (QLFK) form an aspartate region. L-aspartate is bound at residue arginine 217. ATP contacts are provided by residues 217–219 (RDE) and glutamine 226. Position 447 (histidine 447) interacts with L-aspartate. ATP is bound at residue glutamate 481. Arginine 488 contributes to the L-aspartate binding site. 533 to 536 (GLDR) is an ATP binding site.

The protein belongs to the class-II aminoacyl-tRNA synthetase family. Type 1 subfamily. As to quaternary structure, homodimer.

The protein localises to the cytoplasm. It catalyses the reaction tRNA(Asp) + L-aspartate + ATP = L-aspartyl-tRNA(Asp) + AMP + diphosphate. Its function is as follows. Catalyzes the attachment of L-aspartate to tRNA(Asp) in a two-step reaction: L-aspartate is first activated by ATP to form Asp-AMP and then transferred to the acceptor end of tRNA(Asp). This chain is Aspartate--tRNA ligase, found in Aeromonas salmonicida (strain A449).